Reading from the N-terminus, the 79-residue chain is UPF0180 protein BCB4264_A1446 (79 aa).

Belongs to the UPF0180 family.

This chain is UPF0180 protein BCB4264_A1446, found in Bacillus cereus (strain B4264).